The primary structure comprises 132 residues: UPF0299 membrane protein CKO_00648 (132 aa).

The next 4 helical transmembrane spans lie at 7-27 (IIWQ…AGIF), 31-51 (LLPI…VLLA), 63-83 (GCYV…VGVM), and 93-113 (FGPV…VVSW).

Belongs to the UPF0299 family.

The protein localises to the cell inner membrane. This is UPF0299 membrane protein CKO_00648 from Citrobacter koseri (strain ATCC BAA-895 / CDC 4225-83 / SGSC4696).